A 306-amino-acid polypeptide reads, in one-letter code: Zinc finger protein 625 (306 aa).

The C2H2-type 1; degenerate zinc-finger motif lies at 31 to 53 (PRVKSCGEVSVGHASLNRHHRAD). 8 C2H2-type zinc fingers span residues 69-91 (YKCT…EWAH), 97-119 (YDCE…RIMH), 125-147 (YKCN…KRTH), 153-175 (YECK…ERTH), 181-203 (YECS…KITH), 209-231 (YECK…ERTH), 237-259 (YECK…GRTH), and 265-287 (YECK…ERTH). Position 209 is a phosphotyrosine (Tyr209). The disordered stretch occupies residues 287–306 (HTGEKPCSSNTSKGQGEKIA).

Belongs to the krueppel C2H2-type zinc-finger protein family.

The protein localises to the nucleus. Its function is as follows. May be involved in transcriptional regulation. In Homo sapiens (Human), this protein is Zinc finger protein 625 (ZNF625).